The chain runs to 104 residues: 10 kDa heat shock protein, mitochondrial (104 aa).

Ser-81 bears the Phosphoserine mark.

This sequence belongs to the GroES chaperonin family. Homohexamer.

It localises to the mitochondrion matrix. Eukaryotic CPN10 homolog which is essential for mitochondrial protein biogenesis, together with CPN60. Binds to CPN60 in the presence of Mg-ATP and suppresses the ATPase activity of the latter. This Schizosaccharomyces pombe (strain 972 / ATCC 24843) (Fission yeast) protein is 10 kDa heat shock protein, mitochondrial (hsp10).